The sequence spans 455 residues: ATP-dependent protease ATPase subunit HslU (455 aa).

Residues isoleucine 19 and 61–66 contribute to the ATP site; that span reads GVGKTE. A disordered region spans residues 144–163; it reads ESKVGFANEPAEDAASKKEK. 3 residues coordinate ATP: aspartate 268, glutamate 333, and arginine 405.

The protein belongs to the ClpX chaperone family. HslU subfamily. A double ring-shaped homohexamer of HslV is capped on each side by a ring-shaped HslU homohexamer. The assembly of the HslU/HslV complex is dependent on binding of ATP.

The protein localises to the cytoplasm. Functionally, ATPase subunit of a proteasome-like degradation complex; this subunit has chaperone activity. The binding of ATP and its subsequent hydrolysis by HslU are essential for unfolding of protein substrates subsequently hydrolyzed by HslV. HslU recognizes the N-terminal part of its protein substrates and unfolds these before they are guided to HslV for hydrolysis. The sequence is that of ATP-dependent protease ATPase subunit HslU from Francisella tularensis subsp. novicida (strain U112).